We begin with the raw amino-acid sequence, 370 residues long: Proto-oncogene Wnt-1 (370 aa).

The signal sequence occupies residues 1–27; the sequence is MGLWALLPGWVSATLLLALAALPAALA. N29 carries N-linked (GlcNAc...) asparagine glycosylation. Cystine bridges form between C93–C104, C143–C151, C153–C170, C218–C232, C220–C227, C299–C330, C315–C325, C329–C369, C345–C360, C347–C357, and C352–C353. S224 carries O-palmitoleoyl serine; by PORCN lipidation. Residues N316 and N346 are each glycosylated (N-linked (GlcNAc...) asparagine). N359 is a glycosylation site (N-linked (GlcNAc...) asparagine).

Belongs to the Wnt family. Forms a soluble 1:1 complex with AFM; this prevents oligomerization and is required for prolonged biological activity. The complex with AFM may represent the physiological form in body fluids. Interacts with PORCN. Interacts with RSPO1, RSPO2 and RSPO3. Interacts with WLS. Palmitoleoylation is required for efficient binding to frizzled receptors. Palmitoleoylation is necessary for proper trafficking to cell surface. Depalmitoleoylated by NOTUM, leading to inhibit Wnt signaling pathway.

The protein localises to the secreted. The protein resides in the extracellular space. It is found in the extracellular matrix. Functionally, ligand for members of the frizzled family of seven transmembrane receptors. Acts in the canonical Wnt signaling pathway by promoting beta-catenin-dependent transcriptional activation. In some developmental processes, is also a ligand for the coreceptor RYK, thus triggering Wnt signaling. Plays an essential role in the development of the embryonic brain and central nervous system (CNS). Has a role in osteoblast function, bone development and bone homeostasis. The polypeptide is Proto-oncogene Wnt-1 (WNT1) (Homo sapiens (Human)).